A 456-amino-acid chain; its full sequence is MRPHHIHHIAIVGSGPSGFFAAASVLKAADASDEINVAVDMLEMLPTPWGLVRSGVAPDHPKIKSISKQFEKTAEDPRFRFFGNVIVGKHIEPAELAERYDAVIYAVGAQSDRALNIPGEDLPGSIAAVDFVGWYNAHPNFHERSPDLSGSRAVVIGNGNVALDVTRILITDPDVLAFTDIADHALESLRPRGIEEVVIVGRRGPLQTAFTTLELRELADIEGVDVLVDPAQLEGISDENAAAAGKTTRQNIKVLRDYTVRTPKPGHRRIVFRFLTSPIEIKGKGKVERIVLGQNELVTDDNGRVAAKDTGVREELPAQLIVRSIGYRGVPTPGLPFDDSSVTIPNTNGRVNGSRNEYVVGWIKRGPTGVIGTNKKDSQDTVDTLMENLAGANDTEKFGADHADRLAEWLAERQPKLVTSAHWQAIDRFERAAGEPHGRPRVKLPNLAELLRIGHG.

FAD-binding residues include serine 17, glutamate 43, leucine 51, and valine 87. NADP(+) contacts are provided by residues arginine 113, 158–161 (NGNV), 202–203 (RR), and glutamate 214. FAD is bound by residues tryptophan 362 and 369-371 (GVI). An NADP(+)-binding site is contributed by glycine 369.

It belongs to the ferredoxin--NADP reductase type 1 family. As to quaternary structure, monomer. The cofactor is FAD.

The catalysed reaction is 2 reduced [2Fe-2S]-[ferredoxin] + NADP(+) + H(+) = 2 oxidized [2Fe-2S]-[ferredoxin] + NADPH. May serve as electron transfer protein and supply electrons to P450 systems. The sequence is that of NADPH-ferredoxin reductase FprA (fprA) from Mycobacterium leprae (strain TN).